Consider the following 235-residue polypeptide: tRNA pseudouridine synthase B (235 aa).

The Nucleophile role is filled by D48.

Belongs to the pseudouridine synthase TruB family. Type 1 subfamily.

The enzyme catalyses uridine(55) in tRNA = pseudouridine(55) in tRNA. In terms of biological role, responsible for synthesis of pseudouridine from uracil-55 in the psi GC loop of transfer RNAs. In Phocaeicola vulgatus (strain ATCC 8482 / DSM 1447 / JCM 5826 / CCUG 4940 / NBRC 14291 / NCTC 11154) (Bacteroides vulgatus), this protein is tRNA pseudouridine synthase B.